Reading from the N-terminus, the 495-residue chain is Protein SLENDER RICE1-LIKE 1 (495 aa).

One can recognise a GRAS domain in the interval 77–449; sequence EEEEVAGIRL…RPLFSASAWE (373 aa). A leucine repeat I (LRI) region spans residues 84–140; that stretch reads IRLVHLLMSCAGAIEAGDHALASAQLADSHAALAAVSAASGIGRVAVHFTTALSRRL. The VHIID stretch occupies residues 158–223; sequence YHHFYEACPY…GGPPFLRITG (66 aa). The VHIID motif lies at 189-193; the sequence is VHVID. Residues 237 to 269 are leucine repeat II (LRII); that stretch reads DVGLRLADLARSVRVRFSFRGVAANSLDEVRPW. The PFYRE stretch occupies residues 279–371; it reads VAFNSVLQLH…EAYLQREICD (93 aa). An LXXLL motif motif is present at residues 287–291; it reads LHRLL. Residues 374-449 are SAW; sequence CGEGAARRER…RPLFSASAWE (76 aa). The interval 451–495 is disordered; it reads AGDGGGDNNNNSNSNVSGSSGSDSNNSGSSNGKSSGARDGSSVCL. Low complexity predominate over residues 458-485; the sequence is NNNNSNSNVSGSSGSDSNNSGSSNGKSS.

It belongs to the GRAS family. In terms of tissue distribution, expressed in elongating internodes and flowers. Expressed in floral meristem, stamen primordia and tapetum in developing anthers. Expressed at low levels in roots, shoot apices and rachis.

Its subcellular location is the nucleus. Functionally, probable transcriptional regulator that acts as a repressor of the gibberellin (GA) signaling pathway. Its repressive activity is weaker than that of SLR1. Its overexpression prevents the GA signaling pathway and induces a dwarf phenotype. The chain is Protein SLENDER RICE1-LIKE 1 from Oryza sativa subsp. japonica (Rice).